The chain runs to 424 residues: CinA-like protein (424 aa).

Belongs to the CinA family.

This is CinA-like protein from Shewanella halifaxensis (strain HAW-EB4).